Consider the following 411-residue polypeptide: Phosphopentomutase (411 aa).

6 residues coordinate Mn(2+): Asp-14, Asp-306, His-311, Asp-347, His-348, and His-359.

It belongs to the phosphopentomutase family. Mn(2+) is required as a cofactor.

It localises to the cytoplasm. The enzyme catalyses 2-deoxy-alpha-D-ribose 1-phosphate = 2-deoxy-D-ribose 5-phosphate. It carries out the reaction alpha-D-ribose 1-phosphate = D-ribose 5-phosphate. Its pathway is carbohydrate degradation; 2-deoxy-D-ribose 1-phosphate degradation; D-glyceraldehyde 3-phosphate and acetaldehyde from 2-deoxy-alpha-D-ribose 1-phosphate: step 1/2. Isomerase that catalyzes the conversion of deoxy-ribose 1-phosphate (dRib-1-P) and ribose 1-phosphate (Rib-1-P) to deoxy-ribose 5-phosphate (dRib-5-P) and ribose 5-phosphate (Rib-5-P), respectively. The sequence is that of Phosphopentomutase from Lactococcus lactis subsp. cremoris (strain MG1363).